Consider the following 438-residue polypeptide: uncharacterized protein (438 aa).

An N6-(pyridoxal phosphate)lysine modification is found at lysine 273.

This sequence belongs to the class-III pyridoxal-phosphate-dependent aminotransferase family. Pyridoxal 5'-phosphate serves as cofactor.

It is found in the mitochondrion. This is an uncharacterized protein from Schizosaccharomyces pombe (strain 972 / ATCC 24843) (Fission yeast).